Reading from the N-terminus, the 654-residue chain is Dystrobrevin beta (654 aa).

Met-1 is modified (N-acetylmethionine). Residues Thr-11, Thr-69, Thr-179, and Thr-212 each carry the phosphothreonine modification. The segment at 238-294 (FHPVECSYCHCESMMGFRYRCQQCHNYQLCQNCFWRGHAGGPHSNQHQMKELSSWKS) adopts a ZZ-type zinc-finger fold. 8 residues coordinate Zn(2+): Cys-243, Cys-246, Cys-258, Cys-261, Cys-267, Cys-270, His-280, and His-284. Position 394 is a phosphoserine (Ser-394). The interval 399-448 (DEEHRLIARYAARLAAEAGNMTRPPTDASFNFDANKQQRQLIAELENKNR) is syntrophin-binding region. Residue Thr-424 is modified to Phosphothreonine. Residues 429 to 519 (NFDANKQQRQ…LEGLMKLLKA (91 aa)) are a coiled coil. The tract at residues 520–562 (QATGSPHTSPTHGGGRSMPMPVRSTSAGSTPTHGPQDSLSGVG) is disordered. Polar residues-rich tracts occupy residues 521 to 530 (ATGSPHTSPT) and 542 to 558 (RSTS…QDSL).

The protein belongs to the dystrophin family. Dystrobrevin subfamily. Interacts with dystrophin short form DP71 and syntrophins SNTG1 and SNTG2. Binds DTNBP1. Forms a specific complex composed of DMD, SNTB2 and SNTA1 in neuron; the interaction with SNTB2 and SNTA1 is DMD independent. Interacts with UTRN and dystrophin short form DP71 in the kidney and liver. Interacts with SNTB1, SNTB2 and SNTA1 in kidney and liver. Interacts with KIF5A. Interacts with HMG20A and HMG20B. Interacts with OLFM1. Interacts with PRKAR2B and PRKAR1A. Post-translationally, phosphorylated by PKA. Phosphorylation at Thr-11 alters the interaction with KIF5A. Expressed in neurons. In the isocortex, expressed most prominently in the somata (including the nuclei) and the dendrites of the pyramidal cells. Expressed in the hippocampus CA1, CA2, and CA3 neurons, namely in the initial segments of dendrites. Expressed in the Purkinje cells, molecular layer interneurons, and granule cells of cerebellum. Expressed in axon fascicles associated with the spinal trigeminal tract and in the internal capsule in the brainstem.

Its subcellular location is the cytoplasm. It is found in the postsynaptic density. It localises to the cell projection. The protein resides in the dendrite. The protein localises to the basal cell membrane. Its subcellular location is the postsynapse. It is found in the nucleus. Scaffolding protein that assembles DMD and SNTA1 molecules to the basal membrane of kidney cells and liver sinusoids. May function as a repressor of the SYN1 promoter through the binding of repressor element-1 (RE-1), in turn regulates SYN1 expression and may be involved in cell proliferation regulation during the early phase of neural differentiation. May be required for proper maturation and function of a subset of inhibitory synapses. The chain is Dystrobrevin beta from Rattus norvegicus (Rat).